Reading from the N-terminus, the 104-residue chain is Large ribosomal subunit protein bL21 (104 aa).

This sequence belongs to the bacterial ribosomal protein bL21 family. In terms of assembly, part of the 50S ribosomal subunit. Contacts protein L20.

Its function is as follows. This protein binds to 23S rRNA in the presence of protein L20. The protein is Large ribosomal subunit protein bL21 of Leptospira interrogans serogroup Icterohaemorrhagiae serovar copenhageni (strain Fiocruz L1-130).